Consider the following 243-residue polypeptide: Ribonuclease 3 (243 aa).

An RNase III domain is found at 10-146 (INRFRKRFDT…FIGALYLDQG (137 aa)). E59 provides a ligand contact to Mg(2+). Residue D63 is part of the active site. Mg(2+) is bound by residues D132 and E135. Residue E135 is part of the active site. The region spanning 172-241 (DFKTQFQEYV…AESAYKQLKQ (70 aa)) is the DRBM domain. The segment covering 219 to 231 (GKGKTKKESEQRA) has biased composition (basic and acidic residues). The tract at residues 219–243 (GKGKTKKESEQRAAESAYKQLKQIK) is disordered.

Belongs to the ribonuclease III family. In terms of assembly, homodimer. The cofactor is Mg(2+).

The protein resides in the cytoplasm. It carries out the reaction Endonucleolytic cleavage to 5'-phosphomonoester.. Functionally, digests double-stranded RNA. Involved in the processing of primary rRNA transcript to yield the immediate precursors to the large and small rRNAs (23S and 16S). Processes some mRNAs, and tRNAs when they are encoded in the rRNA operon. Processes pre-crRNA and tracrRNA of type II CRISPR loci if present in the organism. The chain is Ribonuclease 3 from Staphylococcus aureus (strain bovine RF122 / ET3-1).